We begin with the raw amino-acid sequence, 227 residues long: Octanoyltransferase (227 aa).

A BPL/LPL catalytic domain is found at 35-210 (DKTPDEIWLV…TFLQLVGYSA (176 aa)). Residues 74 to 81 (RGGQVTYH), 141 to 143 (SLG), and 154 to 156 (GLA) each bind substrate. C172 serves as the catalytic Acyl-thioester intermediate.

It belongs to the LipB family.

It is found in the cytoplasm. The catalysed reaction is octanoyl-[ACP] + L-lysyl-[protein] = N(6)-octanoyl-L-lysyl-[protein] + holo-[ACP] + H(+). Its pathway is protein modification; protein lipoylation via endogenous pathway; protein N(6)-(lipoyl)lysine from octanoyl-[acyl-carrier-protein]: step 1/2. Functionally, catalyzes the transfer of endogenously produced octanoic acid from octanoyl-acyl-carrier-protein onto the lipoyl domains of lipoate-dependent enzymes. Lipoyl-ACP can also act as a substrate although octanoyl-ACP is likely to be the physiological substrate. The sequence is that of Octanoyltransferase from Pectobacterium atrosepticum (strain SCRI 1043 / ATCC BAA-672) (Erwinia carotovora subsp. atroseptica).